The primary structure comprises 333 residues: Delta(9)-fatty-acid desaturase fat-5 (333 aa).

4 helical membrane passes run 42–62 (NVALFVALHIGALVGLYQLVF), 66–86 (WATVGWVFLLHTLGSMGVTGG), 187–207 (LPLVGIFCFALPTFIPVVLWG), and 210–230 (AFIAFYTAALFRYCFTLHATW).

Belongs to the fatty acid desaturase type 1 family. In terms of tissue distribution, expressed in the intestine in adult worms and in all four larval stages. Additional expression in the pharynx and tail cells after hatching and throughout the lifespan.

Its subcellular location is the membrane. It carries out the reaction hexadecanoyl-CoA + 2 Fe(II)-[cytochrome b5] + O2 + 2 H(+) = (9Z)-hexadecenoyl-CoA + 2 Fe(III)-[cytochrome b5] + 2 H2O. The catalysed reaction is tetradecanoyl-CoA + 2 Fe(II)-[cytochrome b5] + O2 + 2 H(+) = (9Z)-tetradecenoyl-CoA + 2 Fe(III)-[cytochrome b5] + 2 H2O. It catalyses the reaction heptadecanoyl-CoA + 2 Fe(II)-[cytochrome b5] + O2 + 2 H(+) = (9Z)-heptadecenoyl-CoA + 2 Fe(III)-[cytochrome b5] + 2 H2O. The enzyme catalyses pentadecanoyl-CoA + 2 Fe(II)-[cytochrome b5] + O2 + 2 H(+) = (9Z)-pentadecenoyl-CoA + 2 Fe(III)-[cytochrome b5] + 2 H2O. Its pathway is lipid metabolism; monounsaturated fatty acid biosynthesis. Functionally, delta(9)-fatty acid desaturase that acts preferentially on palmitoyl-CoA (hexadecanoyl-CoA) producing the monounsaturated palmitoleoyl-CoA ((9Z)-hexadecenoyl-CoA), which can be elongated to (11Z)-octadecenoyl-CoA (the most abundant monounsaturated fatty acid in Caenorhabditis elegans phospholipids and triacylglycerols). Also acts on pentadecanoyl-CoA, heptadecanoyl-CoA and myristoyl-CoA (tetradecanoyl-CoA), the monounsaturated fatty acids (MUFAs) produced are further used as substrates to synthesize polyunsaturated fatty acids (PUFAs) by several other desaturases and elongases. Unlike plants, Caenorhabditis elegans desaturases seem to use fatty acyl-CoAs as substrates. In Caenorhabditis elegans, this protein is Delta(9)-fatty-acid desaturase fat-5 (fat-5).